The primary structure comprises 525 residues: Keratin, type II cytoskeletal 4 (525 aa).

Residues 1-145 (MIARQSSVRG…DPEIQKIRTA (145 aa)) are head. The residue at position 13 (arginine 13) is an Omega-N-methylarginine. Residues 146–181 (EREQIKTLNNKFASFIDKVRFLEQQNKVLETKWNLL) are coil 1A. The IF rod domain maps to 146–459 (EREQIKTLNN…KLLEGEECRM (314 aa)). A linker 1 region spans residues 182–200 (QQQTTTTSPKSLDPFFETY). A coil 1B region spans residues 201–292 (INALRKNLDT…VLYEAELAQM (92 aa)). The tract at residues 293 to 316 (QTHVSDTSVVLSMDNNRNLDLDGI) is linker 12. Residues 317 to 455 (IAEVRAQYED…ATYRKLLEGE (139 aa)) form a coil 2 region. The tract at residues 456 to 524 (ECRMSGECKS…SSATITKRSP (69 aa)) is tail.

Belongs to the intermediate filament family. As to quaternary structure, heterotetramer of two type I and two type II keratins. Keratin-4 is generally associated with keratin-13. As to expression, expressed in the dorsal and ventral epithelium of the tongue. Highest expression levels are detected in the suprabasal layer with low levels detected in the basal cell layer. Within the suprabasal layer expression is highest in the spinous cells, decreases in the granular cells and is not detected in the stratum corneum.

In Mus musculus (Mouse), this protein is Keratin, type II cytoskeletal 4 (Krt4).